Consider the following 227-residue polypeptide: MAKKGKKYQDAVKLVDKNKVYEVVEGVELVKKAATAKFDETVEVAFRLGVDPKRADQQIRGAVVLPHGTGKVQRVLVFAKGEKAKDAEAAGADFVGDADMIAKIQGGWFDFDVVVATPDMMGEVGKLGRVLGPKGLMPNPKTGTVTFDVTKAVNEIKAGKIEYRVDKAGNIHAPIGKASFDADKLVENLAALTEALNRAKPAAAKGVYMRNVTLSSTMGPGVRVAVK.

Belongs to the universal ribosomal protein uL1 family. As to quaternary structure, part of the 50S ribosomal subunit.

Its function is as follows. Binds directly to 23S rRNA. The L1 stalk is quite mobile in the ribosome, and is involved in E site tRNA release. In terms of biological role, protein L1 is also a translational repressor protein, it controls the translation of the L11 operon by binding to its mRNA. The polypeptide is Large ribosomal subunit protein uL1 (Brevibacillus brevis (strain 47 / JCM 6285 / NBRC 100599)).